The following is a 366-amino-acid chain: Cobalt-precorrin-5B C(1)-methyltransferase (366 aa).

This sequence belongs to the CbiD family.

The enzyme catalyses Co-precorrin-5B + S-adenosyl-L-methionine = Co-precorrin-6A + S-adenosyl-L-homocysteine. Its pathway is cofactor biosynthesis; adenosylcobalamin biosynthesis; cob(II)yrinate a,c-diamide from sirohydrochlorin (anaerobic route): step 6/10. Catalyzes the methylation of C-1 in cobalt-precorrin-5B to form cobalt-precorrin-6A. This Thermus thermophilus (strain ATCC BAA-163 / DSM 7039 / HB27) protein is Cobalt-precorrin-5B C(1)-methyltransferase.